The sequence spans 148 residues: Large ribosomal subunit protein bL9 (148 aa).

It belongs to the bacterial ribosomal protein bL9 family.

Binds to the 23S rRNA. The polypeptide is Large ribosomal subunit protein bL9 (Chromohalobacter salexigens (strain ATCC BAA-138 / DSM 3043 / CIP 106854 / NCIMB 13768 / 1H11)).